The primary structure comprises 281 residues: ATP phosphoribosyltransferase (281 aa).

Belongs to the ATP phosphoribosyltransferase family. Long subfamily. Mg(2+) is required as a cofactor.

The protein localises to the cytoplasm. The catalysed reaction is 1-(5-phospho-beta-D-ribosyl)-ATP + diphosphate = 5-phospho-alpha-D-ribose 1-diphosphate + ATP. It functions in the pathway amino-acid biosynthesis; L-histidine biosynthesis; L-histidine from 5-phospho-alpha-D-ribose 1-diphosphate: step 1/9. Feedback inhibited by histidine. Catalyzes the condensation of ATP and 5-phosphoribose 1-diphosphate to form N'-(5'-phosphoribosyl)-ATP (PR-ATP). Has a crucial role in the pathway because the rate of histidine biosynthesis seems to be controlled primarily by regulation of HisG enzymatic activity. This is ATP phosphoribosyltransferase from Kocuria rhizophila (strain ATCC 9341 / DSM 348 / NBRC 103217 / DC2201).